The following is a 641-amino-acid chain: Putative phagocytic receptor 1a (641 aa).

The first 23 residues, 1–23 (MKINKKQIVFFILFSIFLNHVNG), serve as a signal peptide directing secretion. The Extracellular segment spans residues 24–279 (IFYLPGMIPH…ESNDNSVHWF (256 aa)). Residues 280-300 (SILNSLMIVFILTVMVAMIII) traverse the membrane as a helical segment. Residues 301 to 349 (RTLKKDIRRYTSIDTSEDRDSQEETGWKMIHGDVFRPPSHPMLLSVCIG) are Cytoplasmic-facing. Residues 350 to 370 (SGVQIFSMTLITMIFAVLGFL) form a helical membrane-spanning segment. The Extracellular segment spans residues 371-374 (SPAN). The chain crosses the membrane as a helical span at residues 375-395 (IGGLATALIVLFVLSAMFAGY). The Cytoplasmic segment spans residues 396–413 (FSTRVFTIFKGRNWKKNT). A helical membrane pass occupies residues 414–434 (IYTALSMPGIIFGIFFFVNMF). Residues 435–445 (LRGAKSSAAVP) lie on the Extracellular side of the membrane. A helical membrane pass occupies residues 446-466 (FGTFASIIAMWFGISVPLVFL). Residues 467–502 (GSYFASKKPVPEDPVRTNQIPRQVPDQIWYMNPYLS) are Cytoplasmic-facing. A helical transmembrane segment spans residues 503–523 (ILMGGILPFGAVFIELHFILT). Residues 524–532 (SLWDNQFYY) are Extracellular-facing. A helical membrane pass occupies residues 533-553 (IFGFLFIVLMILIVTSAEISI). At 554 to 578 (VMCYFQLCAEDHHWWWRSFLTAGSS) the chain is on the cytoplasmic side. Residues 579-599 (SLYMFIYSVSFFRYLGITKFI) traverse the membrane as a helical segment. The Extracellular portion of the chain corresponds to 600 to 608 (SSLLDFSYS). Residues 609–629 (FIMSLAFAALTGTIGFYSCYF) traverse the membrane as a helical segment. Topologically, residues 630–641 (LVRKIYSSIHIN) are cytoplasmic.

It belongs to the nonaspanin (TM9SF) (TC 9.A.2) family.

It localises to the membrane. Functionally, involved in adhesion, phagocytosis of hydrophilic particles and intracellular killing of bacteria. Associates with proteins harboring glycine-rich transmembrane domains and ensures their efficient localization to the cell surface. The polypeptide is Putative phagocytic receptor 1a (phg1a) (Dictyostelium discoideum (Social amoeba)).